Here is a 156-residue protein sequence, read N- to C-terminus: Methylated-DNA--protein-cysteine methyltransferase (156 aa).

Catalysis depends on cysteine 126, which acts as the Nucleophile; methyl group acceptor.

It belongs to the MGMT family.

The protein resides in the cytoplasm. It carries out the reaction a 6-O-methyl-2'-deoxyguanosine in DNA + L-cysteinyl-[protein] = S-methyl-L-cysteinyl-[protein] + a 2'-deoxyguanosine in DNA. It catalyses the reaction a 4-O-methyl-thymidine in DNA + L-cysteinyl-[protein] = a thymidine in DNA + S-methyl-L-cysteinyl-[protein]. Its function is as follows. Involved in the cellular defense against the biological effects of O6-methylguanine (O6-MeG) and O4-methylthymine (O4-MeT) in DNA. Repairs the methylated nucleobase in DNA by stoichiometrically transferring the methyl group to a cysteine residue in the enzyme. This is a suicide reaction: the enzyme is irreversibly inactivated. This Methanosarcina acetivorans (strain ATCC 35395 / DSM 2834 / JCM 12185 / C2A) protein is Methylated-DNA--protein-cysteine methyltransferase.